The primary structure comprises 969 residues: RNA polymerase-associated protein RapA (969 aa).

Residues 162–339 form the Helicase ATP-binding domain; it reads EVGQRVAPRV…FARLALLDAD (178 aa). An ATP-binding site is contributed by 175-182; it reads DEVGLGKT. Residues 285-288 carry the DEAH box motif; the sequence is DEAH. The Helicase C-terminal domain occupies 492-663; the sequence is RIEWLITFLK…GFLKNPQAVG (172 aa).

It belongs to the SNF2/RAD54 helicase family. RapA subfamily. In terms of assembly, interacts with the RNAP. Has a higher affinity for the core RNAP than for the holoenzyme. Its ATPase activity is stimulated by binding to RNAP.

Functionally, transcription regulator that activates transcription by stimulating RNA polymerase (RNAP) recycling in case of stress conditions such as supercoiled DNA or high salt concentrations. Probably acts by releasing the RNAP, when it is trapped or immobilized on tightly supercoiled DNA. Does not activate transcription on linear DNA. Probably not involved in DNA repair. The chain is RNA polymerase-associated protein RapA from Actinobacillus pleuropneumoniae serotype 7 (strain AP76).